The following is a 71-amino-acid chain: Small ribosomal subunit protein bS21 (71 aa).

This sequence belongs to the bacterial ribosomal protein bS21 family.

This Acidithiobacillus ferrooxidans (strain ATCC 23270 / DSM 14882 / CIP 104768 / NCIMB 8455) (Ferrobacillus ferrooxidans (strain ATCC 23270)) protein is Small ribosomal subunit protein bS21.